The primary structure comprises 447 residues: N-succinylarginine dihydrolase (447 aa).

Residues 19 to 28, Asn-110, and 137 to 138 each bind substrate; these read AGLSFGNEAS and HR. The active site involves Glu-174. Arg-212 is a substrate binding site. His-248 is a catalytic residue. Substrate is bound by residues Asp-250 and Asn-359. Cys-365 serves as the catalytic Nucleophile.

The protein belongs to the succinylarginine dihydrolase family. Homodimer.

It carries out the reaction N(2)-succinyl-L-arginine + 2 H2O + 2 H(+) = N(2)-succinyl-L-ornithine + 2 NH4(+) + CO2. The protein operates within amino-acid degradation; L-arginine degradation via AST pathway; L-glutamate and succinate from L-arginine: step 2/5. Catalyzes the hydrolysis of N(2)-succinylarginine into N(2)-succinylornithine, ammonia and CO(2). The sequence is that of N-succinylarginine dihydrolase from Escherichia coli (strain SE11).